The chain runs to 230 residues: MRLAGPLRIVVLVVSVGVTWIVVSILLGGPGSGFPRIQQLFTSPESSVTAAPRARKYKCGLPQPCPEEHLAFRVVSGAANVIGPKICLEDKMLMSSVKDNVGRGLNIALVNGVSGELIEARAFDMWAGDVNDLLKFIRPLHEGTLVFVASYDDPATKMNEETRKLFSELGSRNAKELAFRDSWVFVGAKGVQNKSPFEQHVKNSKHSNKYEGWPEALEMEGCIPRRSTAS.

Positions 1-33 (MRLAGPLRIVVLVVSVGVTWIVVSILLGGPGSG) are cleaved as a signal peptide. Cystine bridges form between cysteine 59-cysteine 87 and cysteine 65-cysteine 222. The GG-type lectin domain maps to 68–226 (EHLAFRVVSG…LEMEGCIPRR (159 aa)).

This sequence belongs to the FAM3 family. In similar amounts in testis, pancreas, adrenal, placenta, brain, fetal brain, liver, kidney, skeletal muscle and heart.

It is found in the secreted. Functionally, may act as a defensin against invading fungal microorganisms. In Homo sapiens (Human), this protein is Protein FAM3A (FAM3A).